Here is a 343-residue protein sequence, read N- to C-terminus: Phosphoglycerate mutase-like protein 2 (343 aa).

Residues 1–35 (MIHQSMTSNLSFYISSVSHLSSPLPSLSRLSLRCC) constitute a chloroplast transit peptide. The active-site Tele-phosphohistidine intermediate is His65. The active-site Proton donor/acceptor is Glu177. The disordered stretch occupies residues 322-343 (MTNYPGTILTGEDASSDIADQK).

It belongs to the phosphoglycerate mutase family.

It localises to the plastid. Its subcellular location is the chloroplast. Its function is as follows. May play a role in carbohydrates metabolism. The polypeptide is Phosphoglycerate mutase-like protein 2 (Arabidopsis thaliana (Mouse-ear cress)).